The sequence spans 406 residues: MIPLNRRASQTRGGMEYFDARRKPHNVGKVIAALVLTTLCIFILKQSPGFGGSSVFSRHEPGVTHVLVTGGAGYIGSHASLRLLKDNYRVTIVDNLSRGNMGAVKVLQELFPQPGRLQFIYADLGDQKTVNKIFAENAFDAVMHFAAVAYVGESTLEPLRYYHNITSNTLLILEAMASHGVKTLIYSSTCATYGEPEKMPIVETTRQLPINPYGKAKKMAEDIILDFTKGRKDMAVMILRYFNVIGSDPEGRLGEAPRPELREHGRISGACFDAALGIIPGLKVKGTDYPTTDGTCIRDYIDVTDLVDAHVKALNKAEPSKVGIYNVGTGRGRSVKEFVDACKKATGVNIKIEYLSRRPGDYAEVYSDPTKINTELNWTAQYTDLKESLSVAWRWQKSHPRGYGSN.

Residues 1-26 are Cytoplasmic-facing; the sequence is MIPLNRRASQTRGGMEYFDARRKPHN. The helical; Signal-anchor for type II membrane protein transmembrane segment at 27-44 threads the bilayer; it reads VGKVIAALVLTTLCIFIL. At 45–406 the chain is on the lumenal side; that stretch reads KQSPGFGGSS…KSHPRGYGSN (362 aa). Residue 65–96 coordinates NAD(+); the sequence is HVLVTGGAGYIGSHASLRLLKDNYRVTIVDNL. Tyrosine 213 functions as the Proton acceptor in the catalytic mechanism.

The protein belongs to the NAD(P)-dependent epimerase/dehydratase family. The cofactor is NAD(+).

It localises to the golgi apparatus. The protein localises to the golgi stack membrane. It catalyses the reaction UDP-beta-L-arabinopyranose = UDP-alpha-D-xylose. Its pathway is nucleotide-sugar biosynthesis; UDP-L-arabinose biosynthesis; UDP-L-arabinose from UDP-alpha-D-xylose: step 1/1. It participates in cell wall biogenesis; cell wall polysaccharide biosynthesis. The protein is Probable UDP-arabinose 4-epimerase 3 (UEL-3) of Oryza sativa subsp. japonica (Rice).